A 1075-amino-acid polypeptide reads, in one-letter code: DNA-directed RNA polymerase subunit beta (1075 aa).

The protein belongs to the RNA polymerase beta chain family. As to quaternary structure, in plastids the minimal PEP RNA polymerase catalytic core is composed of four subunits: alpha, beta, beta', and beta''. When a (nuclear-encoded) sigma factor is associated with the core the holoenzyme is formed, which can initiate transcription.

It is found in the plastid. The protein localises to the chloroplast. The catalysed reaction is RNA(n) + a ribonucleoside 5'-triphosphate = RNA(n+1) + diphosphate. DNA-dependent RNA polymerase catalyzes the transcription of DNA into RNA using the four ribonucleoside triphosphates as substrates. This is DNA-directed RNA polymerase subunit beta from Sorghum bicolor (Sorghum).